A 120-amino-acid chain; its full sequence is Large ribosomal subunit protein eL34 (120 aa).

The protein belongs to the eukaryotic ribosomal protein eL34 family.

The sequence is that of Large ribosomal subunit protein eL34 (RPL34) from Nicotiana tabacum (Common tobacco).